The primary structure comprises 440 residues: Trigger factor (440 aa).

Residues 163 to 248 enclose the PPIase FKBP-type domain; sequence GDILTVDFLG…AKALKRRVAP (86 aa).

Belongs to the FKBP-type PPIase family. Tig subfamily.

It localises to the cytoplasm. The catalysed reaction is [protein]-peptidylproline (omega=180) = [protein]-peptidylproline (omega=0). Functionally, involved in protein export. Acts as a chaperone by maintaining the newly synthesized protein in an open conformation. Functions as a peptidyl-prolyl cis-trans isomerase. The polypeptide is Trigger factor (Acidiphilium cryptum (strain JF-5)).